A 200-amino-acid polypeptide reads, in one-letter code: ATP-dependent Clp protease proteolytic subunit 1 (200 aa).

The Nucleophile role is filled by Ser98. His123 is a catalytic residue.

Belongs to the peptidase S14 family. In terms of assembly, fourteen ClpP subunits assemble into 2 heptameric rings which stack back to back to give a disk-like structure with a central cavity, resembling the structure of eukaryotic proteasomes.

It localises to the cytoplasm. The catalysed reaction is Hydrolysis of proteins to small peptides in the presence of ATP and magnesium. alpha-casein is the usual test substrate. In the absence of ATP, only oligopeptides shorter than five residues are hydrolyzed (such as succinyl-Leu-Tyr-|-NHMec, and Leu-Tyr-Leu-|-Tyr-Trp, in which cleavage of the -Tyr-|-Leu- and -Tyr-|-Trp bonds also occurs).. In terms of biological role, cleaves peptides in various proteins in a process that requires ATP hydrolysis. Has a chymotrypsin-like activity. Plays a major role in the degradation of misfolded proteins. In Mycobacterium bovis (strain ATCC BAA-935 / AF2122/97), this protein is ATP-dependent Clp protease proteolytic subunit 1.